Reading from the N-terminus, the 127-residue chain is Major sperm protein 38 (127 aa).

An N-acetylalanine modification is found at A2. The MSP domain occupies 9 to 126; it reads DIQTQPGTKI…RRKNLPIEYN (118 aa).

In terms of tissue distribution, sperm.

The protein resides in the cell projection. Its subcellular location is the pseudopodium. The protein localises to the cytoplasm. It is found in the cytoskeleton. In terms of biological role, central component in molecular interactions underlying sperm crawling. Forms an extensive filament system that extends from sperm villipoda, along the leading edge of the pseudopod. The sequence is that of Major sperm protein 38 (msp-38) from Caenorhabditis elegans.